The sequence spans 297 residues: Developmental pluripotency-associated protein 4 (297 aa).

Positions 1–77 (MEPSGSKKGR…KVPVPPFPQH (77 aa)) are disordered. Positions 23–34 (SSQPSTSSAKTK) are enriched in low complexity. Basic and acidic residues predominate over residues 43–63 (SEKDDGCKPEEKSAQDPETPG). Residue S211 is modified to Phosphoserine.

Interacts with DPPA2. Interacts with PCGF1.

It is found in the nucleus. Functionally, may be involved in the maintenance of active epigenetic status of target genes. May inhibit differentiation of embryonic stem (ES) cells into a primitive ectoderm lineage. In Rattus norvegicus (Rat), this protein is Developmental pluripotency-associated protein 4 (Dppa4).